A 316-amino-acid polypeptide reads, in one-letter code: MAEVKVKVQPPDADPVEIENRIIELCHQFPHGITDQVIQNEMPHIEAQQRAVAINRLLSMGQLDLLRSNTGLLYRIKDSQNAGKMKGSDNQEKLVYQIIEDAGNKGIWSRDIRYKSNLPLTEINKILKNLESKKLIKAVKSVAASKKKVYMLYNLQPDRSVTGGAWYSDQDFESEFVEVLNQQCFKFLQSKAETARESKQNPVIQRNSSFASSHEVWKYICELGISKVELSMEDIETILNTLIYDGKVEMTIIAAKEGTVGSVDGHMKLYRAVNPILPPTGVVRAPCGLCPVFEDCHEGGEISPSNCIYMTEWLEF.

The residue at position 2 (alanine 2) is an N-acetylalanine. Residues lysine 5 and lysine 7 each participate in a glycyl lysine isopeptide (Lys-Gly) (interchain with G-Cter in SUMO2) cross-link. Positions 287, 290, 296, and 307 each coordinate [4Fe-4S] cluster.

It belongs to the eukaryotic RPC34/RPC39 RNA polymerase subunit family. As to quaternary structure, component of the RNA polymerase III complex consisting of 17 subunits: a ten-subunit horseshoe-shaped catalytic core composed of POLR3A/RPC1, POLR3B/RPC2, POLR1C/RPAC1, POLR1D/RPAC2, POLR3K/RPC10, POLR2E/RPABC1, POLR2F/RPABC2, POLR2H/RPABC3, POLR2K/RPABC4 and POLR2L/RPABC5; a mobile stalk composed of two subunits POLR3H/RPC8 and CRCP/RPC9, protruding from the core and functioning primarily in transcription initiation; and additional subunits homologous to general transcription factors of the RNA polymerase II machinery, POLR3C/RPC3-POLR3F/RPC6-POLR3G/RPC7 heterotrimer required for transcription initiation and POLR3D/RPC4-POLR3E/RPC5 heterodimer involved in both transcription initiation and termination. Directly interacts with POLR3C. Interacts with TBP and TFIIIB90 and GTF3C4. Interacts with MAF1. As part of the RNA polymerase III complex, interacts with PKP2.

The protein localises to the nucleus. DNA-dependent RNA polymerase catalyzes the transcription of DNA into RNA using the four ribonucleoside triphosphates as substrates. Specific peripheric component of RNA polymerase III (Pol III) which synthesizes small non-coding RNAs including 5S rRNA, snRNAs, tRNAs and miRNAs from at least 500 distinct genomic loci. Part of POLR3C/RPC3-POLR3F/RPC6-POLR3G/RPC7 heterotrimer that coordinates the dynamics of Pol III stalk and clamp modules during the transition from apo to elongation state. Pol III plays a key role in sensing and limiting infection by intracellular bacteria and DNA viruses, including varicella zoster virus. Acts as a nuclear and cytosolic DNA sensor detecting AT-rich DNA, involved in innate immune response. Can sense non-self dsDNA that serves as template for transcription into dsRNA. The non-self RNA polymerase III transcripts, such as Epstein-Barr virus-encoded RNAs (EBERs) induce type I interferon and NF-kappa-B through the RIG-I pathway. Preferentially binds double-stranded DNA (dsDNA). The protein is DNA-directed RNA polymerase III subunit RPC6 of Mus musculus (Mouse).